Here is a 436-residue protein sequence, read N- to C-terminus: GTPase Der (436 aa).

2 consecutive EngA-type G domains span residues 4-167 (PVVA…PKGG) and 176-351 (IKFC…DNHA). GTP is bound by residues 10-17 (GRPNVGKS), 57-61 (DTGGI), 119-122 (NKID), 182-189 (GRPNVGKS), 229-233 (DTAGM), and 294-297 (NKWD). Residues 352-436 (MRVQTNVLNE…PIKIIARPRK (85 aa)) enclose the KH-like domain.

This sequence belongs to the TRAFAC class TrmE-Era-EngA-EngB-Septin-like GTPase superfamily. EngA (Der) GTPase family. In terms of assembly, associates with the 50S ribosomal subunit.

Its function is as follows. GTPase that plays an essential role in the late steps of ribosome biogenesis. This is GTPase Der from Geobacillus kaustophilus (strain HTA426).